A 616-amino-acid chain; its full sequence is Replication protein A 70 kDa DNA-binding subunit (616 aa).

N-acetylmethionine is present on methionine 1. Glycyl lysine isopeptide (Lys-Gly) (interchain with G-Cter in ubiquitin) cross-links involve residues lysine 22 and lysine 88. The interval 121 to 155 (GLGQPQVAPPAPAASPAASSRPQPQNGTSGAGSTV) is disordered. Over residues 134–145 (ASPAASSRPQPQ) the composition is skewed to low complexity. A compositionally biased stretch (polar residues) spans 146–155 (NGTSGAGSTV). Residues lysine 163 and lysine 167 each carry the N6-acetyllysine; alternate modification. Residues lysine 163 and lysine 167 each participate in a glycyl lysine isopeptide (Lys-Gly) (interchain with G-Cter in ubiquitin); alternate cross-link. The residue at position 180 (threonine 180) is a Phosphothreonine. A Glycyl lysine isopeptide (Lys-Gly) (interchain with G-Cter in ubiquitin) cross-link involves residue lysine 183. Threonine 191 is modified (phosphothreonine). The OB DNA-binding region spans 197–281 (WTICARVTNK…VKNDYEMTFN (85 aa)). Residues lysine 220 and lysine 244 each participate in a glycyl lysine isopeptide (Lys-Gly) (interchain with G-Cter in ubiquitin) cross-link. Position 259 is an N6-acetyllysine; alternate (lysine 259). Lysine 259 participates in a covalent cross-link: Glycyl lysine isopeptide (Lys-Gly) (interchain with G-Cter in ubiquitin); alternate. Glycyl lysine isopeptide (Lys-Gly) (interchain with G-Cter in ubiquitin) cross-links involve residues lysine 267 and lysine 331. Serine 384 bears the Phosphoserine mark. Residues lysine 410 and lysine 431 each participate in a glycyl lysine isopeptide (Lys-Gly) (interchain with G-Cter in ubiquitin) cross-link. Lysine 449 is covalently cross-linked (Glycyl lysine isopeptide (Lys-Gly) (interchain with G-Cter in SUMO)). Residue lysine 458 forms a Glycyl lysine isopeptide (Lys-Gly) (interchain with G-Cter in ubiquitin) linkage. The C4-type zinc finger occupies 481–503 (CPTQDCNKKVIDQQNGLYRCEKC). Lysine 553 is covalently cross-linked (Glycyl lysine isopeptide (Lys-Gly) (interchain with G-Cter in ubiquitin)). A Glycyl lysine isopeptide (Lys-Gly) (interchain with G-Cter in SUMO) cross-link involves residue lysine 577.

Belongs to the replication factor A protein 1 family. Component of the canonical replication protein A complex (RPA), a heterotrimer composed of RPA1, RPA2 and RPA3. The DNA-binding activity may reside exclusively on the RPA1 subunit. Interacts with PRPF19; the PRP19-CDC5L complex is recruited to the sites of DNA repair where it ubiquitinates the replication protein A complex (RPA). Interacts with RIPK1. Interacts with the polymerase alpha subunit POLA1/p180; this interaction stabilizes the replicative complex and reduces the misincorporation rate of DNA polymerase alpha by acting as a fidelity clamp. Interacts with RAD51 and SENP6 to regulate DNA repair. Interacts with HELB; this interaction promotes HELB recruitment to chromatin following DNA damage. Interacts with PRIMPOL; leading to recruit PRIMPOL on chromatin and stimulate its DNA primase activity. Interacts with XPA; the interaction is direct and associates XPA with the RPA complex. Interacts with ETAA1; the interaction is direct and promotes ETAA1 recruitment at stalled replication forks. Interacts with RPA1; this interaction associates HROB with the RPA complex. Interacts (when poly-ADP-ribosylated) with HTATSF1. In terms of processing, DNA damage-induced 'Lys-63'-linked polyubiquitination by PRPF19 mediates ATRIP recruitment to the RPA complex at sites of DNA damage and activation of ATR. Ubiquitinated by RFWD3 at stalled replication forks in response to DNA damage: ubiquitination by RFWD3 does not lead to degradation by the proteasome and promotes removal of the RPA complex from stalled replication forks, promoting homologous recombination. Sumoylated on lysine residues Lys-449 and Lys-577, with Lys-449 being the major site. Sumoylation promotes recruitment of RAD51 to the DNA damage foci to initiate DNA repair through homologous recombination. Desumoylated by SENP6. Post-translationally, poly-ADP-ribosylated by PARP1; promoting recruitment of HTATSF1.

The protein localises to the nucleus. It is found in the PML body. Functionally, as part of the heterotrimeric replication protein A complex (RPA/RP-A), binds and stabilizes single-stranded DNA intermediates, that form during DNA replication or upon DNA stress. It prevents their reannealing and in parallel, recruits and activates different proteins and complexes involved in DNA metabolism. Thereby, it plays an essential role both in DNA replication and the cellular response to DNA damage. In the cellular response to DNA damage, the RPA complex controls DNA repair and DNA damage checkpoint activation. Through recruitment of ATRIP activates the ATR kinase a master regulator of the DNA damage response. It is required for the recruitment of the DNA double-strand break repair factors RAD51 and RAD52 to chromatin in response to DNA damage. Also recruits to sites of DNA damage proteins like XPA and XPG that are involved in nucleotide excision repair and is required for this mechanism of DNA repair. Also plays a role in base excision repair (BER) probably through interaction with UNG. Also recruits SMARCAL1/HARP, which is involved in replication fork restart, to sites of DNA damage. May also play a role in telomere maintenance. The protein is Replication protein A 70 kDa DNA-binding subunit (RPA1) of Pongo abelii (Sumatran orangutan).